The primary structure comprises 296 residues: NADH-cytochrome b5 reductase 2 (296 aa).

A helical transmembrane segment spans residues leucine 2–alanine 24. Residues asparagine 35 to lysine 147 enclose the FAD-binding FR-type domain. Residues aspartate 127–glycine 142 and valine 166–leucine 201 each bind FAD.

This sequence belongs to the flavoprotein pyridine nucleotide cytochrome reductase family. Requires FAD as cofactor.

It localises to the membrane. It catalyses the reaction 2 Fe(III)-[cytochrome b5] + NADH = 2 Fe(II)-[cytochrome b5] + NAD(+) + H(+). NADH-cytochrome b5 reductases are involved in desaturation and elongation of fatty acids, cholesterol biosynthesis and drug metabolism. This chain is NADH-cytochrome b5 reductase 2 (cyb5r2), found in Xenopus laevis (African clawed frog).